Here is a 502-residue protein sequence, read N- to C-terminus: Maturase K (502 aa).

Belongs to the intron maturase 2 family. MatK subfamily.

It is found in the plastid. The protein resides in the chloroplast. In terms of biological role, usually encoded in the trnK tRNA gene intron. Probably assists in splicing its own and other chloroplast group II introns. The protein is Maturase K of Spiraea cantoniensis (Reeve's meadowsweet).